The sequence spans 351 residues: Phospho-N-acetylmuramoyl-pentapeptide-transferase (351 aa).

The next 10 helical transmembrane spans lie at 17–37 (TAYA…FIIL), 63–83 (IPTM…FFWI), 85–105 (LWNV…CLGF), 135–155 (ISVT…YFPF), 158–178 (SLKL…LISA), 190–210 (GLAI…AYLT), 230–250 (LVIF…FNAY), 254–274 (IMMG…TALI), 279–299 (ILFA…IIQV), and 328–348 (QVVI…LSTL).

The protein belongs to the glycosyltransferase 4 family. MraY subfamily. Requires Mg(2+) as cofactor.

Its subcellular location is the cell inner membrane. The enzyme catalyses UDP-N-acetyl-alpha-D-muramoyl-L-alanyl-gamma-D-glutamyl-meso-2,6-diaminopimeloyl-D-alanyl-D-alanine + di-trans,octa-cis-undecaprenyl phosphate = di-trans,octa-cis-undecaprenyl diphospho-N-acetyl-alpha-D-muramoyl-L-alanyl-D-glutamyl-meso-2,6-diaminopimeloyl-D-alanyl-D-alanine + UMP. Its pathway is cell wall biogenesis; peptidoglycan biosynthesis. Its function is as follows. Catalyzes the initial step of the lipid cycle reactions in the biosynthesis of the cell wall peptidoglycan: transfers peptidoglycan precursor phospho-MurNAc-pentapeptide from UDP-MurNAc-pentapeptide onto the lipid carrier undecaprenyl phosphate, yielding undecaprenyl-pyrophosphoryl-MurNAc-pentapeptide, known as lipid I. This chain is Phospho-N-acetylmuramoyl-pentapeptide-transferase, found in Borrelia hermsii (strain HS1 / DAH).